The primary structure comprises 266 residues: MYKRLFISRVILIFALILVISTPNVLAESQPDPMPDDLHKSSEFTGTMGNMKYLYDDHYVSATKVKSVDKFLAHDLIYNISDKKLKNYDKVKTELLNEDLAKKYKDEVVDVYGSNYYVNCYFSSKDNVGKVTGGKTCMYGGITKHEGNHFDNGNLQNVLVRVYENKRNTISFEVQTDKKSVTAQELDIKARNFLINKKNLYEFNSSPYETGYIKFIENNGNTFWYDMMPAPGDKFDQSKYLMMYNDNKTVDSKSVKIEVHLTTKNG.

Residues 1–27 (MYKRLFISRVILIFALILVISTPNVLA) form the signal peptide. Residues aspartate 36 and aspartate 110 each coordinate Zn(2+). Cysteine 120 and cysteine 137 are oxidised to a cystine. Positions 145 and 149 each coordinate Zn(2+).

The protein belongs to the staphylococcal/streptococcal toxin family. In terms of assembly, interacts with MHC class II molecules composed of alpha/HLA-DRA and beta/HLA-DRB1 chains. Interacts with host T-cell receptor/TCR beta variable chain TRBV8-2.

Its subcellular location is the secreted. In terms of biological role, staphylococcal enterotoxin that activates the host immune system by binding as unprocessed molecules to major histocompatibility (MHC) complex class II and T-cell receptor (TCR) molecules. In turn, this ternary complex activates a large number of T-lymphocytes initiating a systemic release of pro-inflammatory cytokines. Also causes the intoxication staphylococcal food poisoning syndrome. This Staphylococcus aureus protein is Enterotoxin type C-3 (entC3).